Here is a 376-residue protein sequence, read N- to C-terminus: MAVSKFIQIRRDLHKIPEIGFKEWKTQQYILDYIGTLSNEHVEVKVWETGVIVKVNGKNPEKIIGYRADIDGLPITEETGYEFASIHEGMMHACGHDVHTTIGLGLLTAAVTERIDDDLVFLFQPAEEGPGGALPMLESEELKEWKPNIILGLHIAPEYPVGTIATKEGLLFANTSELYVDLKGKGGHAAYPHTANDMIVAASHLVTQLQSVISRNVNPLDSAVITIGKITGGTVQNIIAEKSRLEGTIRTLSVESMSRVKSRIEAIIAGIEASFQCEAVIDYGAMYHQVYNHEALTREFMQFVSEQTDMKVITCTEAMTGEDFGYMLQEIPGFMFWLGVNSEYGLHHAKLKPDEEAIEKAIVFLDQYVKWKGTRK.

Residue Asp-69 is part of the active site. Residue Glu-128 is the Proton acceptor of the active site.

The protein belongs to the peptidase M20A family. N-acetyldiaminopimelate deacetylase subfamily.

It carries out the reaction N-acetyl-(2S,6S)-2,6-diaminopimelate + H2O = (2S,6S)-2,6-diaminopimelate + acetate. Its pathway is amino-acid biosynthesis; L-lysine biosynthesis via DAP pathway; LL-2,6-diaminopimelate from (S)-tetrahydrodipicolinate (acetylase route): step 3/3. Functionally, catalyzes the conversion of N-acetyl-diaminopimelate to diaminopimelate and acetate. This Bacillus cereus (strain 03BB102) protein is N-acetyldiaminopimelate deacetylase.